Here is a 169-residue protein sequence, read N- to C-terminus: Ribosome maturation factor RimM (169 aa).

Positions 92–167 constitute a PRC barrel domain; the sequence is PKDTYFICDI…YMKIKVVEGL (76 aa).

It belongs to the RimM family. As to quaternary structure, binds ribosomal protein uS19.

The protein resides in the cytoplasm. Its function is as follows. An accessory protein needed during the final step in the assembly of 30S ribosomal subunit, possibly for assembly of the head region. Essential for efficient processing of 16S rRNA. May be needed both before and after RbfA during the maturation of 16S rRNA. It has affinity for free ribosomal 30S subunits but not for 70S ribosomes. The chain is Ribosome maturation factor RimM from Caldicellulosiruptor bescii (strain ATCC BAA-1888 / DSM 6725 / KCTC 15123 / Z-1320) (Anaerocellum thermophilum).